The sequence spans 200 residues: Guanylyl cyclase-activating protein 2 (200 aa).

Gly2 carries N-myristoyl glycine lipidation. EF-hand domains lie at Gly14–Glu31, Glu53–Gly88, Thr89–Leu124, and Thr141–Val176. Positions 66, 68, 70, 72, 77, 102, 104, 106, 108, 113, 154, 156, 158, 160, and 165 each coordinate Ca(2+).

The N-terminus is blocked. As to expression, in the retina, it is expressed in cone and rod photoreceptor cells.

Its subcellular location is the cell membrane. It localises to the photoreceptor inner segment. It is found in the cell projection. The protein resides in the cilium. The protein localises to the photoreceptor outer segment. Its function is as follows. Stimulates two retinal guanylyl cyclases (GCs) GUCY2D and GUCY2F when free calcium ions concentration is low, and inhibits GUCY2D and GUCY2F when free calcium ions concentration is elevated. This Ca(2+)-sensitive regulation of GCs is a key event in recovery of the dark state of rod photoreceptors following light exposure. May be involved in cone photoreceptor response and recovery of response in bright light. The chain is Guanylyl cyclase-activating protein 2 (GUCA1B) from Homo sapiens (Human).